A 311-amino-acid chain; its full sequence is Aspartate carbamoyltransferase catalytic subunit (311 aa).

Positions 58 and 59 each coordinate carbamoyl phosphate. K86 contributes to the L-aspartate binding site. Positions 108, 136, and 139 each coordinate carbamoyl phosphate. L-aspartate is bound by residues R169 and R224. 2 residues coordinate carbamoyl phosphate: G265 and P266.

The protein belongs to the aspartate/ornithine carbamoyltransferase superfamily. ATCase family. In terms of assembly, heterododecamer (2C3:3R2) of six catalytic PyrB chains organized as two trimers (C3), and six regulatory PyrI chains organized as three dimers (R2).

It catalyses the reaction carbamoyl phosphate + L-aspartate = N-carbamoyl-L-aspartate + phosphate + H(+). It functions in the pathway pyrimidine metabolism; UMP biosynthesis via de novo pathway; (S)-dihydroorotate from bicarbonate: step 2/3. Catalyzes the condensation of carbamoyl phosphate and aspartate to form carbamoyl aspartate and inorganic phosphate, the committed step in the de novo pyrimidine nucleotide biosynthesis pathway. This chain is Aspartate carbamoyltransferase catalytic subunit, found in Geotalea daltonii (strain DSM 22248 / JCM 15807 / FRC-32) (Geobacter daltonii).